The primary structure comprises 667 residues: Coiled-coil domain-containing protein 154 (667 aa).

Coiled coils occupy residues 76-182, 215-302, 384-410, and 457-521; these read VVEL…QEAG, RRVD…GQHE, LLRE…SGHL, and LRGV…KEDN.

The protein localises to the early endosome. The sequence is that of Coiled-coil domain-containing protein 154 from Homo sapiens (Human).